The sequence spans 329 residues: MATYGNETVDNYLYSSYNPYYYKYPKFKGWRQKAYFTNYGEGETYFDNHHRAQLKSILSQINPNLTPRLRKANTKDVGVQVNPKTDASIQCSLGPRTLLARKRDALRRRRQEVQTPGSPVSSGGVRFPRTQAVYSPVESRRLVSLFREEGEEEEDTDLEVTETVDSAEKLESAEKNVRKQGKKSAKQPLSPEKNINKQTETNEENTNEPVKTEQDDLKSKARVRFQSLEQKYGFYHCKDCNLRWESAYVWCVQGTNKVYFKQFCRTCQKSFNPYRVEDIACQTCKKARCTCSVKSRHVDPKRPHRQDLCGRCKGKRLSCDSTFSFKYII.

Disordered stretches follow at residues 106 to 132 and 146 to 218; these read LRRRRQEVQTPGSPVSSGGVRFPRTQA and FREE…DDLK. A compositionally biased stretch (acidic residues) spans 149 to 162; sequence EGEEEEDTDLEVTE. Residues 166-177 are compositionally biased toward basic and acidic residues; the sequence is SAEKLESAEKNV. A 3CxxC-type zinc finger spans residues 231–314; that stretch reads KYGFYHCKDC…RQDLCGRCKG (84 aa).

The protein belongs to the ZAR1 family. In terms of tissue distribution, specifically expressed in ovaries but absent in testes.

The protein localises to the cytoplasm. It localises to the cytoplasmic ribonucleoprotein granule. Functionally, mRNA-binding protein required for maternal mRNA storage, translation and degradation during oocyte maturation. Probably promotes formation of some phase-separated membraneless compartment that stores maternal mRNAs in oocytes: acts by undergoing liquid-liquid phase separation upon binding to maternal mRNAs. Binds to the 3'-UTR of zona pellucida mRNAs, inhibiting their translation. In Danio rerio (Zebrafish), this protein is Zygote arrest protein 1.